A 968-amino-acid polypeptide reads, in one-letter code: uncharacterized protein (968 aa).

The first 27 residues, Met-1–Ala-27, serve as a signal peptide directing secretion. The Autotransporter domain maps to Gly-703–Trp-968.

This is an uncharacterized protein from Escherichia coli (strain K12).